Here is a 297-residue protein sequence, read N- to C-terminus: Ribosomal RNA small subunit methyltransferase A (297 aa).

S-adenosyl-L-methionine is bound by residues Asn31, Leu33, Gly58, Glu79, Asp104, and Asn129.

It belongs to the class I-like SAM-binding methyltransferase superfamily. rRNA adenine N(6)-methyltransferase family. RsmA subfamily.

The protein resides in the cytoplasm. The enzyme catalyses adenosine(1518)/adenosine(1519) in 16S rRNA + 4 S-adenosyl-L-methionine = N(6)-dimethyladenosine(1518)/N(6)-dimethyladenosine(1519) in 16S rRNA + 4 S-adenosyl-L-homocysteine + 4 H(+). Its function is as follows. Specifically dimethylates two adjacent adenosines (A1518 and A1519) in the loop of a conserved hairpin near the 3'-end of 16S rRNA in the 30S particle. May play a critical role in biogenesis of 30S subunits. The protein is Ribosomal RNA small subunit methyltransferase A of Staphylococcus aureus (strain Newman).